A 219-amino-acid polypeptide reads, in one-letter code: Peptide methionine sulfoxide reductase MsrA (219 aa).

Residues 1 to 20 form a disordered region; the sequence is MGLFRSPRQNLPTAADALPG. The active site involves cysteine 55.

This sequence belongs to the MsrA Met sulfoxide reductase family.

It carries out the reaction L-methionyl-[protein] + [thioredoxin]-disulfide + H2O = L-methionyl-(S)-S-oxide-[protein] + [thioredoxin]-dithiol. It catalyses the reaction [thioredoxin]-disulfide + L-methionine + H2O = L-methionine (S)-S-oxide + [thioredoxin]-dithiol. Has an important function as a repair enzyme for proteins that have been inactivated by oxidation. Catalyzes the reversible oxidation-reduction of methionine sulfoxide in proteins to methionine. The polypeptide is Peptide methionine sulfoxide reductase MsrA (Rhodospirillum centenum (strain ATCC 51521 / SW)).